We begin with the raw amino-acid sequence, 300 residues long: 4-hydroxy-tetrahydrodipicolinate synthase (300 aa).

T57 contacts pyruvate. Y145 serves as the catalytic Proton donor/acceptor. K173 functions as the Schiff-base intermediate with substrate in the catalytic mechanism. Residue I213 participates in pyruvate binding.

The protein belongs to the DapA family. Homotetramer; dimer of dimers.

It localises to the cytoplasm. It carries out the reaction L-aspartate 4-semialdehyde + pyruvate = (2S,4S)-4-hydroxy-2,3,4,5-tetrahydrodipicolinate + H2O + H(+). Its pathway is amino-acid biosynthesis; L-lysine biosynthesis via DAP pathway; (S)-tetrahydrodipicolinate from L-aspartate: step 3/4. Catalyzes the condensation of (S)-aspartate-beta-semialdehyde [(S)-ASA] and pyruvate to 4-hydroxy-tetrahydrodipicolinate (HTPA). The sequence is that of 4-hydroxy-tetrahydrodipicolinate synthase from Corynebacterium urealyticum (strain ATCC 43042 / DSM 7109).